We begin with the raw amino-acid sequence, 358 residues long: 3-isopropylmalate dehydrogenase (358 aa).

Residue 77–90 (GPKWTNLPPDQQPE) participates in NAD(+) binding. Residues R98, R108, R137, and D226 each coordinate substrate. Residues D226, D250, and D254 each contribute to the Mg(2+) site. Position 284-296 (284-296 (GSAPDIAGKGIAN)) interacts with NAD(+).

Belongs to the isocitrate and isopropylmalate dehydrogenases family. LeuB type 1 subfamily. Homodimer. Requires Mg(2+) as cofactor. Mn(2+) is required as a cofactor.

The protein localises to the cytoplasm. The enzyme catalyses (2R,3S)-3-isopropylmalate + NAD(+) = 4-methyl-2-oxopentanoate + CO2 + NADH. Its pathway is amino-acid biosynthesis; L-leucine biosynthesis; L-leucine from 3-methyl-2-oxobutanoate: step 3/4. Functionally, catalyzes the oxidation of 3-carboxy-2-hydroxy-4-methylpentanoate (3-isopropylmalate) to 3-carboxy-4-methyl-2-oxopentanoate. The product decarboxylates to 4-methyl-2 oxopentanoate. In Haemophilus influenzae (strain ATCC 51907 / DSM 11121 / KW20 / Rd), this protein is 3-isopropylmalate dehydrogenase (leuB).